A 166-amino-acid chain; its full sequence is Interferon gamma (166 aa).

Residues 1–23 (MKYTSYFLALLLCVLLGFSGSYG) form the signal peptide. Gln-24 is subject to Pyrrolidone carboxylic acid. N-linked (GlcNAc...) asparagine glycosylation is found at Asn-39 and Asn-106.

Belongs to the type II (or gamma) interferon family. In terms of assembly, homodimer. Interacts with IFNGR1 (via extracellular domain); this interaction promotes IFNGR1 dimerization. In terms of tissue distribution, released primarily from activated T lymphocytes.

Its subcellular location is the secreted. Functionally, type II interferon produced by immune cells such as T-cells and NK cells that plays crucial roles in antimicrobial, antiviral, and antitumor responses by activating effector immune cells and enhancing antigen presentation. Primarily signals through the JAK-STAT pathway after interaction with its receptor IFNGR1 to affect gene regulation. Upon IFNG binding, IFNGR1 intracellular domain opens out to allow association of downstream signaling components JAK2, JAK1 and STAT1, leading to STAT1 activation, nuclear translocation and transcription of IFNG-regulated genes. Many of the induced genes are transcription factors such as IRF1 that are able to further drive regulation of a next wave of transcription. Plays a role in class I antigen presentation pathway by inducing a replacement of catalytic proteasome subunits with immunoproteasome subunits. In turn, increases the quantity, quality, and repertoire of peptides for class I MHC loading. Increases the efficiency of peptide generation also by inducing the expression of activator PA28 that associates with the proteasome and alters its proteolytic cleavage preference. Up-regulates as well MHC II complexes on the cell surface by promoting expression of several key molecules such as cathepsins B/CTSB, H/CTSH, and L/CTSL. Participates in the regulation of hematopoietic stem cells during development and under homeostatic conditions by affecting their development, quiescence, and differentiation. In Bos indicus (Zebu), this protein is Interferon gamma (IFNG).